We begin with the raw amino-acid sequence, 479 residues long: Ribosomal RNA small subunit methyltransferase F (479 aa).

S-adenosyl-L-methionine is bound by residues 128–134 (ASAPGSK), glutamate 152, aspartate 179, and aspartate 197. The active-site Nucleophile is cysteine 250.

The protein belongs to the class I-like SAM-binding methyltransferase superfamily. RsmB/NOP family.

The protein resides in the cytoplasm. The enzyme catalyses cytidine(1407) in 16S rRNA + S-adenosyl-L-methionine = 5-methylcytidine(1407) in 16S rRNA + S-adenosyl-L-homocysteine + H(+). Functionally, specifically methylates the cytosine at position 1407 (m5C1407) of 16S rRNA. The polypeptide is Ribosomal RNA small subunit methyltransferase F (Shewanella halifaxensis (strain HAW-EB4)).